A 139-amino-acid polypeptide reads, in one-letter code: uncharacterized protein (139 aa).

This is an uncharacterized protein from Sputnik virophage.